The sequence spans 371 residues: Mitogen-activated protein kinase homolog MMK2 (371 aa).

In terms of domain architecture, Protein kinase spans 37–323; that stretch reads VPPIRSVGRG…VDEALCHPYM (287 aa). ATP-binding positions include 43–51 and Lys66; that span reads VGRGAYGIV. Asp163 functions as the Proton acceptor in the catalytic mechanism. Thr195 carries the post-translational modification Phosphothreonine. The short motif at 195-197 is the TXY element; it reads TEY. The residue at position 197 (Tyr197) is a Phosphotyrosine.

Belongs to the protein kinase superfamily. CMGC Ser/Thr protein kinase family. MAP kinase subfamily. The cofactor is Mg(2+). Post-translationally, dually phosphorylated on Thr-195 and Tyr-197, which activates the enzyme. Autophosphorylated.

The catalysed reaction is L-seryl-[protein] + ATP = O-phospho-L-seryl-[protein] + ADP + H(+). It catalyses the reaction L-threonyl-[protein] + ATP = O-phospho-L-threonyl-[protein] + ADP + H(+). Its activity is regulated as follows. Activated by tyrosine and threonine phosphorylation. The chain is Mitogen-activated protein kinase homolog MMK2 (MMK2) from Medicago sativa (Alfalfa).